Here is a 216-residue protein sequence, read N- to C-terminus: UPF0193 protein EVG1 homolog (216 aa).

Belongs to the UPF0193 (EVG1) family.

In Mus musculus (Mouse), this protein is UPF0193 protein EVG1 homolog.